Here is a 409-residue protein sequence, read N- to C-terminus: Lissencephaly-1 homolog (409 aa).

The LisH domain maps to Gln-7–Thr-39. The stretch at Thr-54–Ala-81 forms a coiled coil. WD repeat units follow at residues Gly-104–Lys-145, Gly-146–Lys-185, Gly-189–Thr-228, Gly-231–Glu-270, Asp-273–Thr-332, Gly-335–Thr-374, and Ala-377–Arg-409.

This sequence belongs to the WD repeat LIS1/nudF family.

Its subcellular location is the cytoplasm. It is found in the cytoskeleton. It localises to the microtubule organizing center. The protein resides in the centrosome. In terms of biological role, positively regulates the activity of the minus-end directed microtubule motor protein dynein. May enhance dynein-mediated microtubule sliding by targeting dynein to the microtubule plus end. Required for several dynein- and microtubule-dependent processes. The chain is Lissencephaly-1 homolog from Drosophila willistoni (Fruit fly).